The sequence spans 297 residues: Large ribosomal subunit protein uL18 (297 aa).

Positions 258-267 (KKAHPKKRWT) are enriched in basic residues. A disordered region spans residues 258–277 (KKAHPKKRWTEKKLTREQRQ). Over residues 268 to 277 (EKKLTREQRQ) the composition is skewed to basic and acidic residues.

This sequence belongs to the universal ribosomal protein uL18 family. Component of the large ribosomal subunit (LSU).

It is found in the cytoplasm. Its subcellular location is the nucleus. Its function is as follows. Component of the ribosome, a large ribonucleoprotein complex responsible for the synthesis of proteins in the cell. The small ribosomal subunit (SSU) binds messenger RNAs (mRNAs) and translates the encoded message by selecting cognate aminoacyl-transfer RNA (tRNA) molecules. The large subunit (LSU) contains the ribosomal catalytic site termed the peptidyl transferase center (PTC), which catalyzes the formation of peptide bonds, thereby polymerizing the amino acids delivered by tRNAs into a polypeptide chain. The nascent polypeptides leave the ribosome through a tunnel in the LSU and interact with protein factors that function in enzymatic processing, targeting, and the membrane insertion of nascent chains at the exit of the ribosomal tunnel. The sequence is that of Large ribosomal subunit protein uL18 (RPL5A) from Helianthus annuus (Common sunflower).